Consider the following 492-residue polypeptide: 2-succinylbenzoate--CoA ligase (492 aa).

It belongs to the ATP-dependent AMP-binding enzyme family. MenE subfamily.

The enzyme catalyses 2-succinylbenzoate + ATP + CoA = 2-succinylbenzoyl-CoA + AMP + diphosphate. The protein operates within quinol/quinone metabolism; 1,4-dihydroxy-2-naphthoate biosynthesis; 1,4-dihydroxy-2-naphthoate from chorismate: step 5/7. It functions in the pathway quinol/quinone metabolism; menaquinone biosynthesis. Functionally, converts 2-succinylbenzoate (OSB) to 2-succinylbenzoyl-CoA (OSB-CoA). The protein is 2-succinylbenzoate--CoA ligase of Geobacillus sp. (strain WCH70).